A 192-amino-acid polypeptide reads, in one-letter code: uncharacterized protein (192 aa).

The 132-residue stretch at 29–160 (QRQAAVLVPI…PLDIERKQQR (132 aa)) folds into the Nudix hydrolase domain. Positions 67-89 (GAADKTDRSIIETALREAQEEVA) match the Nudix box motif. Positions 83 and 87 each coordinate Mg(2+).

Belongs to the Nudix hydrolase family. PCD1 subfamily. The cofactor is Mn(2+). Mg(2+) serves as cofactor.

Functionally, probably mediates the hydrolysis of some nucleoside diphosphate derivatives. This is an uncharacterized protein from Pectobacterium atrosepticum (strain SCRI 1043 / ATCC BAA-672) (Erwinia carotovora subsp. atroseptica).